A 140-amino-acid chain; its full sequence is Nucleoside diphosphate kinase (140 aa).

Residues K11, F59, R87, T93, R104, and N114 each coordinate ATP. The active-site Pros-phosphohistidine intermediate is the H117.

The protein belongs to the NDK family. In terms of assembly, homotetramer. The cofactor is Mg(2+).

It localises to the cytoplasm. It carries out the reaction a 2'-deoxyribonucleoside 5'-diphosphate + ATP = a 2'-deoxyribonucleoside 5'-triphosphate + ADP. It catalyses the reaction a ribonucleoside 5'-diphosphate + ATP = a ribonucleoside 5'-triphosphate + ADP. Its function is as follows. Major role in the synthesis of nucleoside triphosphates other than ATP. The ATP gamma phosphate is transferred to the NDP beta phosphate via a ping-pong mechanism, using a phosphorylated active-site intermediate. The protein is Nucleoside diphosphate kinase of Brucella canis (strain ATCC 23365 / NCTC 10854 / RM-666).